Reading from the N-terminus, the 589-residue chain is Protein OS-9 homolog (589 aa).

The first 21 residues, 1–21, serve as a signal peptide directing secretion; that stretch reads MFSILNKLGIIWLALANISNC. N-linked (GlcNAc...) asparagine glycosylation is found at asparagine 17, asparagine 61, and asparagine 90. Residues 130 to 288 enclose the MRH domain; the sequence is KDCVFAYGSN…VIGVPKLCSL (159 aa). Residues cysteine 132 and cysteine 148 are joined by a disulfide bond. A mannooligosaccharide derivative contacts are provided by tryptophan 143, glutamine 155, aspartate 241, arginine 247, glutamate 270, and tyrosine 276. Intrachain disulfides connect cysteine 240/cysteine 274 and cysteine 255/cysteine 286. The N-linked (GlcNAc...) asparagine glycan is linked to asparagine 426. The interval 497–520 is disordered; that stretch reads GKGSALDSTNNDKNNKATAENDKQ. Residues 509-519 are compositionally biased toward basic and acidic residues; it reads KNNKATAENDK. A Prevents secretion from ER motif is present at residues 586–589; the sequence is HDEL.

This sequence belongs to the OS-9 family. Interacts with missfolded ER lumenal proteins.

Its subcellular location is the endoplasmic reticulum membrane. Functionally, lectin involved in the quality control of the secretory pathway. As a member of the endoplasmic reticulum-associated degradation lumenal (ERAD-L) surveillance system, targets misfolded endoplasmic reticulum lumenal glycoproteins for degradation. This chain is Protein OS-9 homolog (YOS9), found in Debaryomyces hansenii (strain ATCC 36239 / CBS 767 / BCRC 21394 / JCM 1990 / NBRC 0083 / IGC 2968) (Yeast).